An 827-amino-acid chain; its full sequence is uncharacterized protein (827 aa).

A PAS 1 domain is found at 12 to 82; sequence FDADFEAILN…DMDIGVLSTG (71 aa). In terms of domain architecture, PAC 1 spans 212–264; that stretch reads LDVEFRLAAAEGGYSWYRSRAATRRAEDGSILRWYGTVEDIDDRRKMFEALKE. The 71-residue stretch at 265 to 335 folds into the PAS 2 domain; the sequence is SEARFRAIAD…RVFYQAFDLR (71 aa). The 53-residue stretch at 338–390 folds into the PAC 2 domain; the sequence is VRMEYRLKRAGGGSAWVIDIGQPRFASDGTFLGFVGIALDITERRNAEQERLL. One can recognise a GGDEF domain in the interval 428 to 561; it reads TRLAILCLDL…GGGTIVQYEP (134 aa). Residues 570–820 enclose the EAL domain; that stretch reads RQRMKVSLRH…QAMALLKSRS (251 aa).

This is an uncharacterized protein from Sinorhizobium fredii (strain NBRC 101917 / NGR234).